Here is a 447-residue protein sequence, read N- to C-terminus: GTPase Der (447 aa).

EngA-type G domains lie at 4 to 165 (QIIA…PKEK) and 180 to 357 (VQIV…KNWN). Residues 10–17 (GRPNVGKS), 57–61 (DTPGL), 119–122 (NKCE), 186–193 (GRPNAGKS), 233–237 (DTAGL), and 298–301 (NKWD) each bind GTP. Positions 358–443 (KKITTSKLNE…PIRFAYVKTK (86 aa)) constitute a KH-like domain.

The protein belongs to the TRAFAC class TrmE-Era-EngA-EngB-Septin-like GTPase superfamily. EngA (Der) GTPase family. As to quaternary structure, associates with the 50S ribosomal subunit.

In terms of biological role, GTPase that plays an essential role in the late steps of ribosome biogenesis. This Rickettsia canadensis (strain McKiel) protein is GTPase Der.